We begin with the raw amino-acid sequence, 456 residues long: Phospholipase A1 member A (456 aa).

Positions 1-25 (MPPGPWESCFWVGGLLLWLSVGSSG) are cleaved as a signal peptide. The active-site Nucleophile is Ser166. The active-site Charge relay system is the Asp190. Cysteines 245 and 258 form a disulfide. The Charge relay system role is filled by His260. Disulfide bonds link Cys282-Cys293 and Cys296-Cys304. Asn365 carries an N-linked (GlcNAc...) asparagine glycan.

This sequence belongs to the AB hydrolase superfamily. Lipase family.

It localises to the secreted. It catalyses the reaction a 1,2-diacyl-sn-glycero-3-phospho-L-serine + H2O = a 2-acyl-sn-glycero-3-phospho-L-serine + a fatty acid + H(+). The enzyme catalyses 1,2-di-(9Z)-octadecenoyl-sn-glycero-3-phospho-L-serine + H2O = 2-(9Z-octadecenoyl)-sn-glycero-3-phospho-L-serine + (9Z)-octadecenoate + H(+). It carries out the reaction 1-hexadecanoyl-2-(5Z,8Z,11Z,14Z-eicosatetraenoyl)-sn-glycero-3-phospho-L-serine + H2O = 2-(5Z,8Z,11Z,14Z)-eicosatetraenoyl-sn-glycero-3-phospho-L-serine + hexadecanoate + H(+). The catalysed reaction is a 1-acyl-sn-glycero-3-phospho-L-serine + H2O = sn-glycero-3-phospho-L-serine + a fatty acid + H(+). It catalyses the reaction 1-(9Z-octadecenoyl)-sn-glycero-3-phospho-L-serine + H2O = sn-glycero-3-phospho-L-serine + (9Z)-octadecenoate + H(+). In terms of biological role, hydrolyzes the ester bond of the acyl group attached at the sn-1 position of phosphatidylserines (phospholipase A1 activity) and 1-acyl-2-lysophosphatidylserines (lysophospholipase activity) in the pathway of phosphatidylserines acyl chain remodeling. Cleaves phosphatidylserines exposed on the outer leaflet of the plasma membrane of apoptotic cells producing 2-acyl-1-lysophosphatidylserines, which in turn enhance mast cell activation and histamine production. Has no activity toward other glycerophospholipids including phosphatidylcholines, phosphatidylethanolamines, phosphatidic acids or phosphatidylinositols, or glycerolipids such as triolein. The polypeptide is Phospholipase A1 member A (PLA1A) (Pongo abelii (Sumatran orangutan)).